The sequence spans 812 residues: Lon protease (812 aa).

One can recognise a Lon N-terminal domain in the interval 22–215 (YAVLPLRDIV…KALSFMEAEI (194 aa)). 367 to 374 (GPPGVGKT) is an ATP binding site. Residues 602–783 (EDQVGVVTGL…GEVLKHALVR (182 aa)) enclose the Lon proteolytic domain. Active-site residues include Ser689 and Lys732. A disordered region spans residues 787 to 812 (PIEWTEQENPTAVPPVEDEAGASLAH).

The protein belongs to the peptidase S16 family. As to quaternary structure, homohexamer. Organized in a ring with a central cavity.

The protein localises to the cytoplasm. It catalyses the reaction Hydrolysis of proteins in presence of ATP.. ATP-dependent serine protease that mediates the selective degradation of mutant and abnormal proteins as well as certain short-lived regulatory proteins. Required for cellular homeostasis and for survival from DNA damage and developmental changes induced by stress. Degrades polypeptides processively to yield small peptide fragments that are 5 to 10 amino acids long. Binds to DNA in a double-stranded, site-specific manner. Required for wild-type virulence during the initial stages of infection in the mouse model, but not essential for the establishment and maintenance of chronic infection in this host. In Brucella abortus (strain 2308), this protein is Lon protease.